The chain runs to 627 residues: Hemocyanin B chain (627 aa).

Residues His173, His177, and His204 each contribute to the Cu cation site. Asn312 and Asn316 each carry an N-linked (GlcNAc...) asparagine glycan. 3 residues coordinate Cu cation: His324, His328, and His364. Cys534 and Cys582 form a disulfide bridge.

Belongs to the tyrosinase family. Hemocyanin subfamily. In terms of assembly, tarantula hemocyanin is a 24-chain polymer with seven different chains identified. As to expression, hemolymph.

It localises to the secreted. Its subcellular location is the extracellular space. Its function is as follows. Hemocyanins are copper-containing oxygen carriers occurring freely dissolved in the hemolymph of many mollusks and arthropods. The chain is Hemocyanin B chain (HCB) from Aphonopelma sp. (American tarantula).